The sequence spans 397 residues: Chorismate synthase (397 aa).

NADP(+)-binding residues include R40 and R46. FMN is bound by residues 129–131 (RAS), 257–258 (QA), G302, 317–321 (KPIAT), and R343.

It belongs to the chorismate synthase family. In terms of assembly, homotetramer. Requires FMNH2 as cofactor.

The catalysed reaction is 5-O-(1-carboxyvinyl)-3-phosphoshikimate = chorismate + phosphate. The protein operates within metabolic intermediate biosynthesis; chorismate biosynthesis; chorismate from D-erythrose 4-phosphate and phosphoenolpyruvate: step 7/7. Functionally, catalyzes the anti-1,4-elimination of the C-3 phosphate and the C-6 proR hydrogen from 5-enolpyruvylshikimate-3-phosphate (EPSP) to yield chorismate, which is the branch point compound that serves as the starting substrate for the three terminal pathways of aromatic amino acid biosynthesis. This reaction introduces a second double bond into the aromatic ring system. This chain is Chorismate synthase, found in Prosthecochloris aestuarii (strain DSM 271 / SK 413).